The following is a 561-amino-acid chain: Cytochrome P450 monooxygenase iboC (561 aa).

The chain crosses the membrane as a helical span at residues 8–28; it reads RFYYQLLAAVLIPALFVAWAA. C484 is a binding site for heme.

It belongs to the cytochrome P450 family. Heme serves as cofactor.

It localises to the membrane. It participates in secondary metabolite biosynthesis. In terms of biological role, cytochrome P450 monooxygenase; part of the gene cluster that mediates the biosynthesis of the psychoactive metabolites ibotenic acid and muscimol. The first committed step is glutamate hydroxylation by the 2-oxoglutarate-dependent dioxygenase iboH, and the last step is decarboxylation of ibotenic acid to muscimol by the decarboxylase iboD. The order of the intermediate reactions is somewhat ambiguous. IboA likely activates the carboxylic acid at position 5 to introduce an amide bond, and the flavin monooxygenase iboF generates the N-O bond. There are several options for the latter step. One option is that iboF directly hydroxylates the amide nitrogen formed by iboA to produce a hydroxamic acid species. Another option is that iboF hydroxylates an external N-containing compound, whose resulting N-O bond is subsequently introduced into the hydroxyglutamate scaffold. The paralogous PLP-dependent cystathionine gamma-synthase-like enzymes iboG1 and iboG2 are likely involved in substitution of the OH group at position 3 by the O-N moiety. The first cyclic intermediate is most probably tricholomic acid which is likely desaturated to ibotenic acid by the cytochrome P450 monooxygenase iboC. This is Cytochrome P450 monooxygenase iboC from Amanita muscaria (strain Koide BX008).